We begin with the raw amino-acid sequence, 220 residues long: Orotate phosphoribosyltransferase (220 aa).

Lys26 is a binding site for 5-phospho-alpha-D-ribose 1-diphosphate. An orotate-binding site is contributed by 34–35 (FF). 5-phospho-alpha-D-ribose 1-diphosphate-binding positions include 72–73 (YK), Arg99, Lys100, Lys103, His105, and 125–133 (DDVISAGTS). Orotate-binding residues include Ser129 and Arg157.

It belongs to the purine/pyrimidine phosphoribosyltransferase family. PyrE subfamily. Homodimer. Mg(2+) is required as a cofactor.

It carries out the reaction orotidine 5'-phosphate + diphosphate = orotate + 5-phospho-alpha-D-ribose 1-diphosphate. It functions in the pathway pyrimidine metabolism; UMP biosynthesis via de novo pathway; UMP from orotate: step 1/2. Its function is as follows. Catalyzes the transfer of a ribosyl phosphate group from 5-phosphoribose 1-diphosphate to orotate, leading to the formation of orotidine monophosphate (OMP). This chain is Orotate phosphoribosyltransferase, found in Nitrosococcus oceani (strain ATCC 19707 / BCRC 17464 / JCM 30415 / NCIMB 11848 / C-107).